Consider the following 869-residue polypeptide: Histone deacetylase 4 (869 aa).

Disordered regions lie at residues 1–25 (MEEA…PSTS), 128–167 (SSSN…TISQ), and 180–218 (RSKG…QVNV). A compositionally biased stretch (polar residues) spans 184–202 (ESNSQSNLMSNSVTANGNG). Ser-251 bears the Phosphoserine mark. The tract at residues 460–802 (CTTGLGYDQA…VQALIGESDD (343 aa)) is histone deacetylase. His-608 is a catalytic residue.

Belongs to the histone deacetylase family. HD type 2 subfamily. In terms of assembly, interacts with mef-2. Phosphorylated by serine/threonine-protein kinase kin-29 at Ser-251; the phosphorylation inhibits repression of transcription by mef-2. May be phosphorylated by either cyclic-AMP dependent or cyclic-GMP dependent protein kinases. Expressed in body-wall muscle cells, hypodermal seam cells and neuronal cells including sensory amphid neuronal processes, the nerve ring, ventral nerve cords and motor neuronal commissures.

Its subcellular location is the nucleus. The catalysed reaction is N(6)-acetyl-L-lysyl-[histone] + H2O = L-lysyl-[histone] + acetate. Its function is as follows. Responsible for the deacetylation of lysine residues on the N-terminal part of the core histones (H2A, H2B, H3 and H4). Histone deacetylation gives a tag for epigenetic repression and plays an important role in transcriptional regulation, cell cycle progression and developmental events. Histone deacetylases act via the formation of large multiprotein complexes. Involved in transduction of sensory signals, together with egl-4, kin-29 and mef-2; binding to transcription factor mef-2 enables negative modulation of chemoreceptor gene expression in chemosensory neurons. May be involved in muscle development. In Caenorhabditis elegans, this protein is Histone deacetylase 4 (hda-4).